A 235-amino-acid chain; its full sequence is 5'-methylthioadenosine/S-adenosylhomocysteine nucleosidase (235 aa).

Glutamate 13 acts as the Proton acceptor in catalysis. Residues glycine 79, methionine 154, and 175-176 contribute to the substrate site; that span reads ME. The active-site Proton donor is aspartate 199.

Belongs to the PNP/UDP phosphorylase family. MtnN subfamily.

It carries out the reaction S-adenosyl-L-homocysteine + H2O = S-(5-deoxy-D-ribos-5-yl)-L-homocysteine + adenine. It catalyses the reaction S-methyl-5'-thioadenosine + H2O = 5-(methylsulfanyl)-D-ribose + adenine. The enzyme catalyses 5'-deoxyadenosine + H2O = 5-deoxy-D-ribose + adenine. The protein operates within amino-acid biosynthesis; L-methionine biosynthesis via salvage pathway; S-methyl-5-thio-alpha-D-ribose 1-phosphate from S-methyl-5'-thioadenosine (hydrolase route): step 1/2. Catalyzes the irreversible cleavage of the glycosidic bond in both 5'-methylthioadenosine (MTA) and S-adenosylhomocysteine (SAH/AdoHcy) to adenine and the corresponding thioribose, 5'-methylthioribose and S-ribosylhomocysteine, respectively. Also cleaves 5'-deoxyadenosine, a toxic by-product of radical S-adenosylmethionine (SAM) enzymes, into 5-deoxyribose and adenine. This is 5'-methylthioadenosine/S-adenosylhomocysteine nucleosidase from Chromohalobacter salexigens (strain ATCC BAA-138 / DSM 3043 / CIP 106854 / NCIMB 13768 / 1H11).